We begin with the raw amino-acid sequence, 426 residues long: Melibiose/raffinose/stachyose-binding protein MelE (426 aa).

Residues 1-18 (MKHTFVLFLSLILLVLPG) form the signal peptide. The N-palmitoyl cysteine moiety is linked to residue C19. A lipid anchor (S-diacylglycerol cysteine) is attached at C19.

It belongs to the bacterial solute-binding protein 1 family. As to quaternary structure, the complex is composed of two ATP-binding proteins (MsmX), two transmembrane proteins (MelC and MelD) and a solute-binding protein (MelE).

The protein localises to the cell membrane. Its function is as follows. Part of the ABC transporter complex MelEDC-MsmX involved in melibiose, raffinose and stachyose import. Binds melibiose, raffinose and stachyose. The polypeptide is Melibiose/raffinose/stachyose-binding protein MelE (Bacillus subtilis (strain 168)).